A 2581-amino-acid polypeptide reads, in one-letter code: Highly reducing polyketide synthase sorA (2581 aa).

The Ketosynthase family 3 (KS3) domain occupies 14 to 436; sequence SEPIAIIGMS…GSNAHIILED (423 aa). Active-site for beta-ketoacyl synthase activity residues include C187, H322, and H359. Residues 574–868 form a malonyl-CoA:ACP transacylase (MAT) domain region; that stretch reads VFTGQGAQWN…VVEVGPHTAL (295 aa). Residues 966-1103 form an N-terminal hotdog fold region; sequence HDLLGSIVEG…GLVSVELGES (138 aa). Residues 966–1270 form a dehydratase (DH) domain region; that stretch reads HDLLGSIVEG…GFSYQSLGRS (305 aa). The region spanning 966-1273 is the PKS/mFAS DH domain; that stretch reads HDLLGSIVEG…YQSLGRSTSL (308 aa). The active-site Proton acceptor; for dehydratase activity is the H998. The segment at 1119 to 1273 is C-terminal hotdog fold; that stretch reads TRRILPADLF…YQSLGRSTSL (155 aa). The active-site Proton donor; for dehydratase activity is the D1184. A methyltransferase (CMet) domain region spans residues 1461 to 1568; sequence LEVGAATGAI…SSLLKPGGTL (108 aa). Residues 1873–2184 are enoyl reductase (ER)domain; sequence LKPDLLVFGD…AGDQIGKVVL (312 aa). The segment at 2207–2389 is ketoreductase (KR) domain; that stretch reads VSYLIVGGSG…AVSIDLSVVN (183 aa). The region spanning 2497–2574 is the Carrier domain; the sequence is DAVRVVGTAI…QLAIDVVDRS (78 aa). Position 2534 is an O-(pantetheine 4'-phosphoryl)serine (S2534).

It functions in the pathway secondary metabolite biosynthesis. In terms of biological role, highly reducing polyketide synthase; part of the gene cluster that mediates the biosynthesis of sorbicillinoids, a diverse group of yellow secondary metabolites that restrict growth of competing pathogenic fungi but not of bacteria. Sorbicillinoids biosynthesis requires the action of two PKSs. SorA iteratively combines three acetyl units and the growing chain is modified by the ketoacyl reductase subunit, and optional by the enoyl reductase subunit in the second cycle. The polyketide is then handed over to the PKS SorB, which adds three more acetyl units, and two methyl groups. SorB releases an aldehyde, which undergoes spontaneous cyclization resulting in the formation of sorbicillin or 2',3'-dihydrosorbicillin. The monooxygenase sorC oxidizes sorbicillin and 2',3'-dihydrosorbicillin to 2',3'-dihydrosorbicillinol and sorbicillinol, respectively. The oxidoreductase sorD further converts sorbicillinol into oxosorbicillinol. Sorbicillinol is the building block for the other sorbicillinoids such as disorbicillinol, bisvertinolon, and dihydrobisvertinolone. The sequence is that of Highly reducing polyketide synthase sorA from Penicillium rubens (strain ATCC 28089 / DSM 1075 / NRRL 1951 / Wisconsin 54-1255) (Penicillium chrysogenum).